A 118-amino-acid polypeptide reads, in one-letter code: MSRGSTNIMLRKLITSLKKQDKAIWVRVAEELEAPRRKRAYINIYKINRYSKANDIIVVPGKVLGVGNLDHPVTVVALSFSKPAKEKILRSGGKVMSLYKAIQELNDFKGKTVRLMKQ.

The protein belongs to the eukaryotic ribosomal protein eL18 family.

This Sulfolobus acidocaldarius (strain ATCC 33909 / DSM 639 / JCM 8929 / NBRC 15157 / NCIMB 11770) protein is Large ribosomal subunit protein eL18 (rpl18e).